We begin with the raw amino-acid sequence, 1388 residues long: Dicer-like protein 2 (1388 aa).

A Helicase ATP-binding domain is found at 23 to 203 (MLEASMKENI…LLTVESNLDA (181 aa)). 36–43 (MDTGSGKT) lines the ATP pocket. Positions 144-147 (DEAH) match the DEAH box motif. The Helicase C-terminal domain maps to 371-537 (SLLNFLDSLD…DDERQLQSVS (167 aa)). Residues 564–658 (AMAHLHHFCA…LPLTKRPELK (95 aa)) form the Dicer dsRNA-binding fold domain. 2 RNase III domains span residues 919–1059 (ATRL…MDGG) and 1098–1281 (NERL…VDSG). Mg(2+) contacts are provided by glutamate 1137, aspartate 1267, and glutamate 1270.

Belongs to the helicase family. Dicer subfamily. Mg(2+) serves as cofactor. Mn(2+) is required as a cofactor.

Its function is as follows. Dicer-like endonuclease involved in cleaving double-stranded RNA in the RNA interference (RNAi) pathway. Produces 21 to 25 bp dsRNAs (siRNAs) which target the selective destruction of homologous RNAs leading to sequence-specific suppression of gene expression, called post-transcriptional gene silencing (PTGS). Part of a broad host defense response against viral infection and transposons. The protein is Dicer-like protein 2 (dcl2) of Neosartorya fischeri (strain ATCC 1020 / DSM 3700 / CBS 544.65 / FGSC A1164 / JCM 1740 / NRRL 181 / WB 181) (Aspergillus fischerianus).